We begin with the raw amino-acid sequence, 332 residues long: L-lactate dehydrogenase A chain (332 aa).

NAD(+)-binding positions include 29–57 (GAVG…MEDK) and arginine 99. Arginine 106, asparagine 138, and arginine 169 together coordinate substrate. Asparagine 138 is an NAD(+) binding site. Histidine 193 serves as the catalytic Proton acceptor. Threonine 248 is a binding site for substrate.

Belongs to the LDH/MDH superfamily. LDH family. As to quaternary structure, homotetramer.

It is found in the cytoplasm. The catalysed reaction is (S)-lactate + NAD(+) = pyruvate + NADH + H(+). It participates in fermentation; pyruvate fermentation to lactate; (S)-lactate from pyruvate: step 1/1. In terms of biological role, interconverts simultaneously and stereospecifically pyruvate and lactate with concomitant interconversion of NADH and NAD(+). In Sceloporus undulatus (Eastern fence lizard), this protein is L-lactate dehydrogenase A chain (LDHA).